An 85-amino-acid polypeptide reads, in one-letter code: Toxin BmKT (85 aa).

The signal sequence occupies residues 1–19 (MNYLVFFSLALLLMTGVES). The LCN-type CS-alpha/beta domain occupies 21-83 (RDGYIADDKN…VPIRVPGKCN (63 aa)). Disulfide bonds link Cys-31/Cys-82, Cys-35/Cys-55, Cys-41/Cys-65, and Cys-45/Cys-67.

This sequence belongs to the long (4 C-C) scorpion toxin superfamily. Sodium channel inhibitor family. Alpha subfamily. As to expression, expressed by the venom gland.

Its subcellular location is the secreted. Functionally, binds to sodium channels (Nav) and inhibits the inactivation of the activated channels, thereby blocking neuronal transmission. Tested on mice, has antitumor effect and strong inhibitory effect on pain. This is Toxin BmKT from Olivierus martensii (Manchurian scorpion).